A 186-amino-acid chain; its full sequence is Peptidyl-tRNA hydrolase (186 aa).

Tyrosine 13 is a tRNA binding site. The Proton acceptor role is filled by histidine 18. TRNA contacts are provided by tyrosine 59, asparagine 61, and asparagine 107.

The protein belongs to the PTH family. In terms of assembly, monomer.

The protein localises to the cytoplasm. The catalysed reaction is an N-acyl-L-alpha-aminoacyl-tRNA + H2O = an N-acyl-L-amino acid + a tRNA + H(+). Hydrolyzes ribosome-free peptidyl-tRNAs (with 1 or more amino acids incorporated), which drop off the ribosome during protein synthesis, or as a result of ribosome stalling. Its function is as follows. Catalyzes the release of premature peptidyl moieties from peptidyl-tRNA molecules trapped in stalled 50S ribosomal subunits, and thus maintains levels of free tRNAs and 50S ribosomes. This is Peptidyl-tRNA hydrolase from Thermotoga maritima (strain ATCC 43589 / DSM 3109 / JCM 10099 / NBRC 100826 / MSB8).